A 239-amino-acid chain; its full sequence is Small ribosomal subunit protein uS3 (239 aa).

One can recognise a KH type-2 domain in the interval 40-108; that stretch reads RGLLEKELYS…VALNVQEVQN (69 aa). The tract at residues 212-239 is disordered; that stretch reads KPKARPELPKAEERPRRRRPAVRVKKEE. Residues 215-226 are compositionally biased toward basic and acidic residues; that stretch reads ARPELPKAEERP. The segment covering 227–239 has biased composition (basic residues); sequence RRRRPAVRVKKEE.

Belongs to the universal ribosomal protein uS3 family. Part of the 30S ribosomal subunit. Forms a tight complex with proteins S10 and S14.

In terms of biological role, binds the lower part of the 30S subunit head. Binds mRNA in the 70S ribosome, positioning it for translation. This chain is Small ribosomal subunit protein uS3 (rpsC), found in Thermus thermophilus (strain ATCC BAA-163 / DSM 7039 / HB27).